A 369-amino-acid chain; its full sequence is Ferrochelatase (369 aa).

Residues His210 and Glu291 each coordinate Fe cation.

This sequence belongs to the ferrochelatase family.

It is found in the cytoplasm. It carries out the reaction heme b + 2 H(+) = protoporphyrin IX + Fe(2+). The protein operates within porphyrin-containing compound metabolism; protoheme biosynthesis; protoheme from protoporphyrin-IX: step 1/1. In terms of biological role, catalyzes the ferrous insertion into protoporphyrin IX. This chain is Ferrochelatase, found in Thioalkalivibrio sulfidiphilus (strain HL-EbGR7).